We begin with the raw amino-acid sequence, 163 residues long: Probable chemoreceptor glutamine deamidase CheD (163 aa).

The protein belongs to the CheD family.

It carries out the reaction L-glutaminyl-[protein] + H2O = L-glutamyl-[protein] + NH4(+). Probably deamidates glutamine residues to glutamate on methyl-accepting chemotaxis receptors (MCPs), playing an important role in chemotaxis. The polypeptide is Probable chemoreceptor glutamine deamidase CheD (Pyrococcus abyssi (strain GE5 / Orsay)).